We begin with the raw amino-acid sequence, 107 residues long: Small ribosomal subunit protein uS10c (107 aa).

This sequence belongs to the universal ribosomal protein uS10 family. Part of the 30S ribosomal subunit.

The protein localises to the plastid. Its subcellular location is the chloroplast. In terms of biological role, involved in the binding of tRNA to the ribosomes. The chain is Small ribosomal subunit protein uS10c from Phaeodactylum tricornutum (strain CCAP 1055/1).